Reading from the N-terminus, the 226-residue chain is Ras-related protein RABA4a (226 aa).

Position 2 is an N-acetylthreonine (Thr-2). Residue 24–31 (GDSAVGKS) coordinates GTP. The Effector region motif lies at 46-54 (SKATIGVEF). Residues 72 to 76 (DTAGQ), 130 to 133 (NKSD), and 160 to 161 (SA) contribute to the GTP site. Positions 189-226 (ASEDQENGNPGSLAGKKIDIVPGPGQVIPNKSNMCCNS) are disordered. Polar residues predominate over residues 217 to 226 (PNKSNMCCNS). 2 S-geranylgeranyl cysteine lipidation sites follow: Cys-223 and Cys-224.

Belongs to the small GTPase superfamily. Rab family. Interacts with TCTP1.

Its subcellular location is the cell membrane. In terms of biological role, intracellular vesicle trafficking and protein transport. This Arabidopsis thaliana (Mouse-ear cress) protein is Ras-related protein RABA4a.